We begin with the raw amino-acid sequence, 299 residues long: tRNA dimethylallyltransferase (299 aa).

8–15 (GPTASGKT) lines the ATP pocket. A substrate-binding site is contributed by 10-15 (TASGKT). The segment at 33–36 (DSQQ) is interaction with substrate tRNA.

Belongs to the IPP transferase family. As to quaternary structure, monomer. Mg(2+) serves as cofactor.

It carries out the reaction adenosine(37) in tRNA + dimethylallyl diphosphate = N(6)-dimethylallyladenosine(37) in tRNA + diphosphate. Functionally, catalyzes the transfer of a dimethylallyl group onto the adenine at position 37 in tRNAs that read codons beginning with uridine, leading to the formation of N6-(dimethylallyl)adenosine (i(6)A). The polypeptide is tRNA dimethylallyltransferase (Anaeromyxobacter dehalogenans (strain 2CP-C)).